Here is a 739-residue protein sequence, read N- to C-terminus: MLCSWRVKLKLLLATITLAVLLSWLYLFVGSLEYGRFLLLPPCLGEQPSRDVEREALASQVRRVEEENQQLRMQLGQVQAEGSDGNPQWAASAEDGPPLGGERNNRTACPEQRMVRKCELLHVAIVCAGHNASRDVVTLVKSILFHRKNPLHFHFITDSVAHQILQTLFQSWMVPSIHVSFYNADDLKPEVSWIPNKHYSGIYGLMKLTLTKALPSNLSKVIVLDTDITFATDIAELWAVFGKFSEKQVIGLVENQSDWYLGNLWKNHKPWPALGRGFNTGVILLLLDRLRRLGWEQMWRLTAERELMSMLSTSLADQDIFNAVIKQNPALVYRLPCFWNVQLSDHTRSELCYTEVSDLKVIHWNSPKKLRVKNKHVEFFRNLYLTFLEYDGNLLRRELFGCASLPSPPSDQLQQALEELDEDDPCYDFRRQHLTQHRVHLFFLQYEFLALPNPTDVTLVAQLSMDRLQMLEAICKHWAGPISLALYMSDAEAQQFLRYAQASEVLSARRNVAYHIVYKEGQFYPINLLRNVALANTQTPYVFLTDIDFLPMYGLYDYLRNSIQQLELPHRKAALIVPAFETLHYRLTFPKSKAELLSMLDMGSLYTFRYHVWPKGHAPTDYAKWRTATVPYRVAWQPDFEPYVVVRRDCPKYDQRFVGFGWNKVSHIMELDAQEYELLVLPNAFMIHMPHAPSFDISKFRLSAGYRGCLQTLREEFHQDLSRKYGAAALKYLTAERNL.

The Cytoplasmic portion of the chain corresponds to methionine 1–lysine 10. A helical; Signal-anchor for type II membrane protein membrane pass occupies residues leucine 11–serine 31. Over leucine 32–leucine 739 the chain is Lumenal. Residues alanine 80–asparagine 105 are disordered. Residues asparagine 105, asparagine 131, and asparagine 217 are each glycosylated (N-linked (GlcNAc...) asparagine). A xylosyltransferase activity region spans residues leucine 121–arginine 396. Residues aspartate 225 and aspartate 227 each coordinate Mn(2+). The N-linked (GlcNAc...) asparagine glycan is linked to asparagine 255. The interval arginine 397 to leucine 739 is glucuronyltransferase activity. Positions 546 and 548 each coordinate Mn(2+).

The protein in the C-terminal section; belongs to the glycosyltransferase 49 family. This sequence in the N-terminal section; belongs to the glycosyltransferase 8 family. It depends on Mn(2+) as a cofactor.

The protein localises to the golgi apparatus membrane. It catalyses the reaction 3-O-[beta-D-GlcA-(1-&gt;3)-beta-D-Xyl-(1-&gt;4)-Rib-ol-P-Rib-ol-P-3-beta-D-GalNAc-(1-&gt;3)-beta-D-GlcNAc-(1-&gt;4)-(O-6-P-alpha-D-Man)]-Thr-[protein] + UDP-alpha-D-xylose = 3-O-[alpha-D-Xyl-(1-&gt;3)-beta-D-GlcA-(1-&gt;4)-beta-D-Xyl-(1-&gt;4)-Rib-ol-P-Rib-ol-P-3-beta-D-GalNAc-(1-&gt;3)-beta-D-GlcNAc-(1-&gt;4)-(O-6-P-alpha-D-Man)]-Thr-[protein] + UDP + H(+). The catalysed reaction is 3-O-{(1-&gt;[3)-alpha-D-Xyl-(1-&gt;3)-beta-D-GlcA-(1-&gt;](n)-4)-beta-D-Xyl-(1-&gt;4)-Rib-ol-P-Rib-ol-P-3-beta-D-GalNAc-(1-&gt;3)-beta-D-GlcNAc-(1-&gt;4)-O-6-P-alpha-D-Man}-L-Thr-[protein] + UDP-alpha-D-glucuronate = 3-O-{beta-D-GlcA-(1-&gt;[3)-alpha-D-Xyl-(1-&gt;3)-beta-D-GlcA-(1-&gt;](n)-4)-beta-D-Xyl-(1-&gt;4)-Rib-ol-P-Rib-ol-P-3-beta-D-GalNAc-(1-&gt;3)-beta-D-GlcNAc-(1-&gt;4)-O-6-P-alpha-D-Man}-L-Thr-[protein] + UDP + H(+). It carries out the reaction 3-O-{beta-D-GlcA-(1-&gt;[3)-alpha-D-Xyl-(1-&gt;3)-beta-D-GlcA-(1-&gt;](n)-4)-beta-D-Xyl-(1-&gt;4)-Rib-ol-P-Rib-ol-P-3-beta-D-GalNAc-(1-&gt;3)-beta-D-GlcNAc-(1-&gt;4)-O-6-P-alpha-D-Man}-L-Thr-[protein] + UDP-alpha-D-xylose = 3-O-{(1-&gt;[3)-alpha-D-Xyl-(1-&gt;3)-beta-D-GlcA-(1-&gt;](n+1)-4)-beta-D-Xyl-(1-&gt;4)-Rib-ol-P-Rib-ol-P-3-beta-D-GalNAc-(1-&gt;3)-beta-D-GlcNAc-(1-&gt;4)-O-6-P-alpha-D-Man}-L-Thr-[protein] + UDP + H(+). It functions in the pathway protein modification; protein glycosylation. In terms of biological role, bifunctional glycosyltransferase with both alpha-1,3-xylosyltransferase and beta-1,3-glucuronyltransferase activities involved in the maturation of alpha-dystroglycan (DAG1) by glycosylation leading to DAG1 binding to laminin G-like domain-containing extracellular proteins with high affinity and in a phosphorylated-O-mannosyl trisaccharide dependent manner. Elongates the glucuronyl-beta-1,4-xylose-beta disaccharide primer structure by adding repeating units [-3-Xylose-alpha-1,3-GlcA-beta-1-] to produce a heteropolysaccharide. Supports the maturation of DAG1 more effectively than LARGE1. In addition, can modify both heparan sulfate (HS)- and chondroitin/dermatan sulfate (CS/DS)-proteoglycans (PGs), namely GPC4, with a glycosaminoglycan (GAG)-like polysaccharide composed of xylose and glucuronic acid to confer laminin binding. This is Xylosyl- and glucuronyltransferase LARGE2s from Gallus gallus (Chicken).